The chain runs to 214 residues: MQLKNPILGLCQQSTFMLSAAKVDQCPDDEGFEVAFAGRSNAGKSSALNTLTHASLARTSKTPGRTQLLNFFKLDDERRLVDLPGYGYAKVPIPLKQHWQRHLEAYLGGRESLKGLILMMDIRHPMTDFDLLMLDWAVAAGMPMHILLTKADKLTYGAAKNTLLKVQSEIRKGWGDQVTIQLFSAPKRMGLEEAYTVLAGWMELADKGAELPAE.

The region spanning 30–204 (EGFEVAFAGR…YTVLAGWMEL (175 aa)) is the EngB-type G domain. GTP contacts are provided by residues 38-45 (GRSNAGKS), 64-68 (GRTQL), 82-85 (DLPG), 149-152 (TKAD), and 182-185 (LFSA). S45 and T66 together coordinate Mg(2+).

Belongs to the TRAFAC class TrmE-Era-EngA-EngB-Septin-like GTPase superfamily. EngB GTPase family. The cofactor is Mg(2+).

Its function is as follows. Necessary for normal cell division and for the maintenance of normal septation. This chain is Probable GTP-binding protein EngB, found in Pseudomonas fluorescens (strain Pf0-1).